We begin with the raw amino-acid sequence, 2338 residues long: Proto-oncogene tyrosine-protein kinase ROS (2338 aa).

The first 27 residues, 1–27 (MKRIRWLTPKPATFVVLGCVWISVAQG), serve as a signal peptide directing secretion. Residues 28–1853 (TILSSCLTSC…EDGFWITETS (1826 aa)) are Extracellular-facing. N-linked (GlcNAc...) asparagine glycosylation is found at Asn52 and Asn77. 2 consecutive Fibronectin type-III domains span residues 110–205 (LPTA…VPET) and 206–294 (APFI…PSPA). N-linked (GlcNAc...) asparagine glycosylation is found at Asn333, Asn361, Asn480, Asn623, Asn934, and Asn1010. Residues 566–666 (LPGHPQEVSV…EPSVGTTLVP (101 aa)) enclose the Fibronectin type-III 3 domain. 2 Fibronectin type-III domains span residues 942–1037 (IPDS…SVPS) and 1038–1145 (APEN…TSEI). Asn1298 carries an N-linked (GlcNAc...) asparagine glycan. Fibronectin type-III domains lie at 1440 to 1548 (VASN…TKSG), 1549 to 1648 (VPGA…VNMF), 1650 to 1743 (TPEK…TKAG), and 1744 to 1845 (VPSK…LVED). Asn1675 carries N-linked (GlcNAc...) asparagine glycosylation. A helical transmembrane segment spans residues 1854 to 1874 (FILTIIVGIFLVATVPLTFVW). Residues 1875–2338 (HRSLKNHKAT…AHSGHGDVSE (464 aa)) lie on the Cytoplasmic side of the membrane. The region spanning 1937 to 2210 (LSLRLLLGSG…YNIQDQLQLF (274 aa)) is the Protein kinase domain. Residues 1943 to 1951 (LGSGAFGEV) and Lys1972 contribute to the ATP site. Asp2071 serves as the catalytic Proton acceptor. The residue at position 2266 (Tyr2266) is a Phosphotyrosine; by autocatalysis. Positions 2277 to 2314 (EDRYEGPLGSKESGLHDLKKDERQPADKDFCQQPQVAY) are disordered. Basic and acidic residues predominate over residues 2289-2306 (SGLHDLKKDERQPADKDF). At Tyr2325 the chain carries Phosphotyrosine; by autocatalysis.

The protein belongs to the protein kinase superfamily. Tyr protein kinase family. Insulin receptor subfamily. As to quaternary structure, interacts with PTPN11; may activate the PI3 kinase-mTOR signaling pathway. Interacts with VAV3; constitutive interaction mediating VAV3 phosphorylation. Interacts with PTPN6 (via SH2 1 domain); the interaction is direct and promotes ROS1 dephosphorylation. In terms of processing, phosphorylated. Probably autophosphorylates. Phosphorylation at Tyr-2266 is required for the interaction with PTPN6 that mediates ROS1 dephosphorylation. Phosphorylation at Tyr-2266 stimulates the kinase activity and the activation of the ERK1 signaling cascade. Phosphorylation at Tyr-2266 and/or Tyr-2325 recruits PTPN11. Expressed in heart, lung, kidney and testis.

The protein localises to the cell membrane. The enzyme catalyses L-tyrosyl-[protein] + ATP = O-phospho-L-tyrosyl-[protein] + ADP + H(+). Inhibited by dephosphorylation by PTPN6. Orphan receptor tyrosine kinase (RTK) that plays a role in epithelial cell differentiation and regionalization of the proximal epididymal epithelium. NELL2 is an endogenous ligand for ROS1. Upon endogenous stimulation by NELL2, ROS1 activates the intracellular signaling pathway and triggers epididymal epithelial differentiation and subsequent sperm maturation. May activate several downstream signaling pathways related to cell differentiation, proliferation, growth and survival including the PI3 kinase-mTOR signaling pathway. Mediates the phosphorylation of PTPN11, an activator of this pathway. May also phosphorylate and activate the transcription factor STAT3 to control anchorage-independent cell growth. Mediates the phosphorylation and the activation of VAV3, a guanine nucleotide exchange factor regulating cell morphology. May activate other downstream signaling proteins including AKT1, MAPK1, MAPK3, IRS1 and PLCG2. In Rattus norvegicus (Rat), this protein is Proto-oncogene tyrosine-protein kinase ROS (Ros1).